Consider the following 62-residue polypeptide: Small ribosomal subunit protein eS27 (62 aa).

Zn(2+)-binding residues include cysteine 17, cysteine 20, cysteine 36, and cysteine 39. The C4-type zinc finger occupies 17 to 39 (CPDCENEQLVFEKATSVVECTVC).

Belongs to the eukaryotic ribosomal protein eS27 family. In terms of assembly, part of the 30S ribosomal subunit. It depends on Zn(2+) as a cofactor.

This is Small ribosomal subunit protein eS27 from Methanocorpusculum labreanum (strain ATCC 43576 / DSM 4855 / Z).